Consider the following 526-residue polypeptide: Lysine--tRNA ligase (526 aa).

Mg(2+) contacts are provided by Glu-431 and Glu-438.

The protein belongs to the class-II aminoacyl-tRNA synthetase family. As to quaternary structure, homodimer. It depends on Mg(2+) as a cofactor.

It localises to the cytoplasm. It carries out the reaction tRNA(Lys) + L-lysine + ATP = L-lysyl-tRNA(Lys) + AMP + diphosphate. This Chlamydia trachomatis serovar D (strain ATCC VR-885 / DSM 19411 / UW-3/Cx) protein is Lysine--tRNA ligase (lysS).